The primary structure comprises 261 residues: MTHQTHAYHMVNPSPWPLTGALSALLMTSGLIMWFHFNSTTLLMLGLTTNMLTMYQWWRDVIRESTFQGHHTPNVQKGLRYGMILFIISEVLFFTGFFWAFYHSSLAPTPELGGCWPPTGINPLNPLEVPLLNTSVLLASGVSITWAHHSLMEGNRNHMLQALFITIALGVYFTLLQASEYYEAPFTISDGVYGSTFFVATGFHGLHVIIGSTFLIVCFFRQLKFHFTSNHHFGFEAAAWYWHFVDVVWLFLYVSIYWWGS.

Residues 1–15 (MTHQTHAYHMVNPSP) are Mitochondrial matrix-facing. The helical transmembrane segment at 16 to 34 (WPLTGALSALLMTSGLIMW) threads the bilayer. Over 35–40 (FHFNST) the chain is Mitochondrial intermembrane. Residues 41–66 (TLLMLGLTTNMLTMYQWWRDVIREST) traverse the membrane as a helical segment. The Mitochondrial matrix portion of the chain corresponds to 67–72 (FQGHHT). The chain crosses the membrane as a helical span at residues 73-105 (PNVQKGLRYGMILFIISEVLFFTGFFWAFYHSS). The Mitochondrial intermembrane segment spans residues 106–128 (LAPTPELGGCWPPTGINPLNPLE). Residues 129-152 (VPLLNTSVLLASGVSITWAHHSLM) form a helical membrane-spanning segment. Residues 153–155 (EGN) lie on the Mitochondrial matrix side of the membrane. A helical membrane pass occupies residues 156 to 183 (RNHMLQALFITIALGVYFTLLQASEYYE). Residues 184–190 (APFTISD) lie on the Mitochondrial intermembrane side of the membrane. Residues 191–223 (GVYGSTFFVATGFHGLHVIIGSTFLIVCFFRQL) traverse the membrane as a helical segment. Residues 224–232 (KFHFTSNHH) are Mitochondrial matrix-facing. A helical transmembrane segment spans residues 233–256 (FGFEAAAWYWHFVDVVWLFLYVSI). At 257–261 (YWWGS) the chain is on the mitochondrial intermembrane side.

It belongs to the cytochrome c oxidase subunit 3 family. As to quaternary structure, component of the cytochrome c oxidase (complex IV, CIV), a multisubunit enzyme composed of 14 subunits. The complex is composed of a catalytic core of 3 subunits MT-CO1, MT-CO2 and MT-CO3, encoded in the mitochondrial DNA, and 11 supernumerary subunits COX4I, COX5A, COX5B, COX6A, COX6B, COX6C, COX7A, COX7B, COX7C, COX8 and NDUFA4, which are encoded in the nuclear genome. The complex exists as a monomer or a dimer and forms supercomplexes (SCs) in the inner mitochondrial membrane with NADH-ubiquinone oxidoreductase (complex I, CI) and ubiquinol-cytochrome c oxidoreductase (cytochrome b-c1 complex, complex III, CIII), resulting in different assemblies (supercomplex SCI(1)III(2)IV(1) and megacomplex MCI(2)III(2)IV(2)).

The protein resides in the mitochondrion inner membrane. The catalysed reaction is 4 Fe(II)-[cytochrome c] + O2 + 8 H(+)(in) = 4 Fe(III)-[cytochrome c] + 2 H2O + 4 H(+)(out). In terms of biological role, component of the cytochrome c oxidase, the last enzyme in the mitochondrial electron transport chain which drives oxidative phosphorylation. The respiratory chain contains 3 multisubunit complexes succinate dehydrogenase (complex II, CII), ubiquinol-cytochrome c oxidoreductase (cytochrome b-c1 complex, complex III, CIII) and cytochrome c oxidase (complex IV, CIV), that cooperate to transfer electrons derived from NADH and succinate to molecular oxygen, creating an electrochemical gradient over the inner membrane that drives transmembrane transport and the ATP synthase. Cytochrome c oxidase is the component of the respiratory chain that catalyzes the reduction of oxygen to water. Electrons originating from reduced cytochrome c in the intermembrane space (IMS) are transferred via the dinuclear copper A center (CU(A)) of subunit 2 and heme A of subunit 1 to the active site in subunit 1, a binuclear center (BNC) formed by heme A3 and copper B (CU(B)). The BNC reduces molecular oxygen to 2 water molecules using 4 electrons from cytochrome c in the IMS and 4 protons from the mitochondrial matrix. The protein is Cytochrome c oxidase subunit 3 (MT-CO3) of Gazella subgutturosa (Goitred gazelle).